Here is a 103-residue protein sequence, read N- to C-terminus: Integration host factor subunit alpha (103 aa).

The disordered stretch occupies residues 55–74; the sequence is CREKPQRPGRNPKTGEEMPI.

Belongs to the bacterial histone-like protein family. Heterodimer of an alpha and a beta chain.

Functionally, this protein is one of the two subunits of integration host factor, a specific DNA-binding protein that functions in genetic recombination as well as in transcriptional and translational control. The protein is Integration host factor subunit alpha of Thiobacillus denitrificans (strain ATCC 25259 / T1).